Reading from the N-terminus, the 202-residue chain is 3-isopropylmalate dehydratase small subunit (202 aa).

The protein belongs to the LeuD family. LeuD type 1 subfamily. Heterodimer of LeuC and LeuD.

The catalysed reaction is (2R,3S)-3-isopropylmalate = (2S)-2-isopropylmalate. The protein operates within amino-acid biosynthesis; L-leucine biosynthesis; L-leucine from 3-methyl-2-oxobutanoate: step 2/4. Its function is as follows. Catalyzes the isomerization between 2-isopropylmalate and 3-isopropylmalate, via the formation of 2-isopropylmaleate. This chain is 3-isopropylmalate dehydratase small subunit, found in Rhizobium etli (strain ATCC 51251 / DSM 11541 / JCM 21823 / NBRC 15573 / CFN 42).